A 312-amino-acid chain; its full sequence is 26S proteasome non-ATPase regulatory subunit 14 (312 aa).

The MPN domain occupies 33-168; that stretch reads VYISSLALLK…IDAFRTINPQ (136 aa). His115, His117, and Asp128 together coordinate Zn(2+). The JAMM motif signature appears at 115–128; sequence HSHPGFGCWLSGVD.

It belongs to the peptidase M67A family. PSMD14 subfamily. As to quaternary structure, component of the 19S regulatory cap of the 26S proteasome.

Its function is as follows. Metalloprotease component of the 26S proteasome that specifically cleaves 'Lys-63'-linked polyubiquitin chains. The 26S proteasome is involved in the ATP-dependent degradation of ubiquitinated proteins. The function of the 'Lys-63'-specific deubiquitination of the proteasome is unclear. This Caenorhabditis elegans protein is 26S proteasome non-ATPase regulatory subunit 14 (rpn-11).